The chain runs to 20 residues: Apidaecin 3+ (20 aa).

The segment at 1–20 is disordered; that stretch reads GKPSRPRPAPIQPRPPHPRL.

It belongs to the apidaecin family.

The protein localises to the secreted. In terms of biological role, antimicrobial peptide active against many Gram-negative enterobacterial and plant-associated bacterial species. Not active against other bacterial species like H.pylori, P.mirabilis, B.pertussis or N.gonorrhoeae. Among others, also active against S.typhi. Functionally, not active against S.typhi. This chain is Apidaecin 3+, found in Pimpla disparis (Parasitic wasp).